Reading from the N-terminus, the 239-residue chain is Uridylate kinase (239 aa).

Residue 13-16 (KLSG) participates in ATP binding. Position 55 (glycine 55) interacts with UMP. ATP-binding residues include glycine 56 and arginine 60. Residues aspartate 75 and 136–143 (TGNPFFTT) each bind UMP. Threonine 163, asparagine 164, tyrosine 169, and aspartate 172 together coordinate ATP.

It belongs to the UMP kinase family. In terms of assembly, homohexamer.

Its subcellular location is the cytoplasm. It carries out the reaction UMP + ATP = UDP + ADP. It functions in the pathway pyrimidine metabolism; CTP biosynthesis via de novo pathway; UDP from UMP (UMPK route): step 1/1. Inhibited by UTP. Catalyzes the reversible phosphorylation of UMP to UDP. This chain is Uridylate kinase, found in Neisseria meningitidis serogroup C / serotype 2a (strain ATCC 700532 / DSM 15464 / FAM18).